The primary structure comprises 302 residues: Glycine--tRNA ligase alpha subunit (302 aa).

It belongs to the class-II aminoacyl-tRNA synthetase family. In terms of assembly, tetramer of two alpha and two beta subunits.

The protein localises to the cytoplasm. The enzyme catalyses tRNA(Gly) + glycine + ATP = glycyl-tRNA(Gly) + AMP + diphosphate. The polypeptide is Glycine--tRNA ligase alpha subunit (Haemophilus ducreyi (strain 35000HP / ATCC 700724)).